The following is a 316-amino-acid chain: Ribosomal RNA small subunit methyltransferase H (316 aa).

S-adenosyl-L-methionine-binding positions include 35–37, Asp55, Phe84, Asp105, and Gln112; that span reads SGH.

This sequence belongs to the methyltransferase superfamily. RsmH family.

It is found in the cytoplasm. It carries out the reaction cytidine(1402) in 16S rRNA + S-adenosyl-L-methionine = N(4)-methylcytidine(1402) in 16S rRNA + S-adenosyl-L-homocysteine + H(+). Its function is as follows. Specifically methylates the N4 position of cytidine in position 1402 (C1402) of 16S rRNA. The sequence is that of Ribosomal RNA small subunit methyltransferase H from Streptococcus dysgalactiae subsp. equisimilis (strain GGS_124).